Here is a 290-residue protein sequence, read N- to C-terminus: ATP synthase gamma chain (290 aa).

The protein belongs to the ATPase gamma chain family. In terms of assembly, F-type ATPases have 2 components, CF(1) - the catalytic core - and CF(0) - the membrane proton channel. CF(1) has five subunits: alpha(3), beta(3), gamma(1), delta(1), epsilon(1). CF(0) has three main subunits: a, b and c.

The protein resides in the cell inner membrane. Functionally, produces ATP from ADP in the presence of a proton gradient across the membrane. The gamma chain is believed to be important in regulating ATPase activity and the flow of protons through the CF(0) complex. The chain is ATP synthase gamma chain from Anaeromyxobacter dehalogenans (strain 2CP-1 / ATCC BAA-258).